A 277-amino-acid polypeptide reads, in one-letter code: Large ribosomal subunit protein uL2 (277 aa).

2 disordered regions span residues 1 to 58 (MGIR…GGGH) and 223 to 277 (GVVM…GKKR). A compositionally biased stretch (basic and acidic residues) spans 23–33 (EITRSEPEKSL). Basic residues predominate over residues 37–58 (LHGRGGRNAHGKITTRHKGGGH). A compositionally biased stretch (basic and acidic residues) spans 251-267 (GKPEGRTRRNKPSDKLI). Residues 268-277 (VRRRRTGKKR) are compositionally biased toward basic residues.

Belongs to the universal ribosomal protein uL2 family. As to quaternary structure, part of the 50S ribosomal subunit. Forms a bridge to the 30S subunit in the 70S ribosome.

One of the primary rRNA binding proteins. Required for association of the 30S and 50S subunits to form the 70S ribosome, for tRNA binding and peptide bond formation. It has been suggested to have peptidyltransferase activity; this is somewhat controversial. Makes several contacts with the 16S rRNA in the 70S ribosome. The sequence is that of Large ribosomal subunit protein uL2 from Saccharopolyspora erythraea (strain ATCC 11635 / DSM 40517 / JCM 4748 / NBRC 13426 / NCIMB 8594 / NRRL 2338).